The chain runs to 563 residues: TSET complex member tstC (563 aa).

Disordered stretches follow at residues 146–170 (SPHQ…SFIT), 192–213 (NSLS…NNDS), 235–298 (VLNS…NYNN), 376–395 (HPNA…NEFK), and 428–563 (GSAS…FLNF). Residues 379-395 (AGKEAKEKEKEKENEFK) are compositionally biased toward basic and acidic residues. Residues 428-459 (GSASSKSSPSTSPLSSSYNPSSPETSENSFSA) show a composition bias toward low complexity. A compositionally biased stretch (polar residues) spans 460-473 (TPISDSNSLKNSID). Low complexity-rich tracts occupy residues 474–487 (NNNN…NNNN) and 507–543 (NNSK…SSAA). Polar residues predominate over residues 552-563 (NSAKTKMNFLNF).

As to quaternary structure, component of the TSET complex, a heterohexamer composed of tstA, tstB, tstC, tstD, tstE and tstF, which may act in plasma membrane turnover. tstA, tstB, tstC and tstD are likely to be the core complex members with tstE and tstF acting as associated scaffold proteins.

The protein is TSET complex member tstC of Dictyostelium discoideum (Social amoeba).